A 713-amino-acid polypeptide reads, in one-letter code: Putative ERAD-associated E3 ubiquitin-protein ligase component (713 aa).

The signal sequence occupies residues 1–20 (MQLLNFLICLFFIFKRCVFT). 2 N-linked (GlcNAc...) asparagine glycosylation sites follow: asparagine 48 and asparagine 123. Sel1-like repeat units follow at residues 83–124 (PESQ…TQNY) and 125–160 (TYAL…HQIS). The N-linked (GlcNAc...) asparagine glycan is linked to asparagine 211. 4 Sel1-like repeats span residues 212–248 (ISAH…RLVN), 280–315 (SIAA…SLNH), 490–525 (IHSL…AIHP), and 527–562 (ALAY…MHDT). Residue asparagine 314 is glycosylated (N-linked (GlcNAc...) asparagine). Positions 621–655 (QLPPEPPTLQVDRTPQQPDPQETSESLPSPNTEEM) are disordered. Residues 631–652 (VDRTPQQPDPQETSESLPSPNT) show a composition bias toward polar residues. The helical transmembrane segment at 671-691 (GRFLETACVTLIVVVVGLVLM) threads the bilayer.

It belongs to the sel-1 family.

The protein resides in the endoplasmic reticulum membrane. In terms of biological role, component of the endoplasmic reticulum quality control (ERQC) system involved in ubiquitin-dependent degradation of missfolded endoplasmic reticulum proteins. The sequence is that of Putative ERAD-associated E3 ubiquitin-protein ligase component from Schizosaccharomyces pombe (strain 972 / ATCC 24843) (Fission yeast).